A 1412-amino-acid chain; its full sequence is MMQGNKKCTDGFSDTSSIGSVLDEADREVSNLTDRAFRSLCISEDTSFHDSDLALSPDVTSQVSGTFHQETVGHANRKSGIWSQLPSQGTEHSGWAATFQQQPKYVQGEEKYPKTSPLPTPVQRRLEVPISGLRSSSKPISKVSSLIRSFDRTETQSCDSRPPPSKPPALKNPPKFAHPPESGVNFCFDSAFLTVRRVPAEVSNTHQGSHQSGRAPGEQESPKNPEIASHSSDSLLRTPDHVAGSFEPRYPSPPLKPATAEPGRGKEWIPRRTFLHSENSAFESWDTHQPKLRERKDIAETTPESKAPKHYEDMPLLKEPYPAESKGSPYQARANCAQEENRSPSGSQSTSGAWGARDPGSQLFPVEGNASQIDPQVKRSKAPWRKPKTGKGGTDGPPDALEDKKQPNRRGLPLYSKLNPQGQLPENGVLDMPEESNDHYNPPFNISKLLTPIISTKHVLETSDTQPVEISPSPPGQLNGYQEKESSEAQSRDSYKSKAPSLLFNLKDVRKRVKSTYSPLPLLKGFDEKTRGKLDSKQEPLSNGVTLPDGLEENPPTELLPDNVPGVLHSSTQKDPAINSRESFAVSHPTFSSPSASSQTHFCVNGEAAESNSNEKEEANGESELDPSKGGGHPDCRENLPRKHLSLKLFNRESEMGPAMAEMKPHQLENGLSRSVSQETETERETGFQSLPLNQKFSPGPLSPEEEDVFYSDSQSDFTPCRQTKAKFSTSSSDQSFASFEDQQKVCFTEGPQEDRKSHVSAGDKQRDETAVEKEESQQCASRNEHRGVDEQRQEEIQRKAQGVSGGRPRKASAEDLSARGSWMGADKDTAHTHAKDPTPLPASTNKHRLFPIKDNTLRATPVIKPIILPLLRTVSSEDSLSSGHQENELPKQLWGEDAGGLSASESQEMPNTPLSNNDVPGTQHRCMVCEDVQEDPVHTAAQDETSQQTRKGSFSFLPPVEEENRMKPSPDTAGEGLAQEKSKSADLGKLGVPQRIPTIALLPDDLEDSPPSLPQHTYWEEQGFKGHFLSAPRAGPSGRRLVPSEAETSPNPSSLGESSTCSPAASSIWEEASQAAGEHWQRQEPPGPNPWASPGPTGLTRREDMTHGLTWEAEGSDPSDFRALSPRGILLADAAEKPEPPALLEKAAGKPPAVPPKTEKALRRAKKLASKRRKSDQLLEKHTEAWEGKSFTEDTQGTERRPVSPGKGPRPRFPAIRSLPPPTHRHSVSCGWEPTGRRPWGPQSLTPLPPYPATQKVLQDPQSGQYFVFDVPLQVKIKTFYDPETGKYVKVSVPSSEEASSEPPLQDALAAPYLLYPGFRPVPVTSVMPLRCSSQLAAPTFLRQGSGHRPQSSQGSRLQPPPERLGESTQHASGQCPRGPSHSPEKESAEAPRLSIISTDDLEDFATEGVS.

Disordered regions lie at residues Val106–Ala177, Val202–Pro443, Leu460–Pro500, Tyr517–His848, Ser877–Thr923, Glu935–Thr1255, and Arg1344–Ser1412. Thr120 carries the phosphothreonine modification. The segment covering Ser135 to Ser145 has biased composition (low complexity). Pro residues predominate over residues Arg161–Lys171. Residues Val202 to Ser212 are compositionally biased toward polar residues. 2 stretches are compositionally biased toward basic and acidic residues: residues Trp285–Ala299 and Lys306–Leu316. Ser328 is modified (phosphoserine). Positions Ser343–Gly352 are enriched in polar residues. The segment covering Lys378–Thr389 has biased composition (basic residues). Ser473 bears the Phosphoserine mark. Composition is skewed to basic and acidic residues over residues Gln482 to Lys496 and Gly525 to Gln538. A compositionally biased stretch (low complexity) spans Ser587–Asn612. Basic and acidic residues predominate over residues Gly632–Pro641. Polar residues-rich tracts occupy residues Asn670–Glu679, Gly687–Phe697, and Ser712–Arg722. Residues Phe728–Glu741 show a composition bias toward low complexity. Over residues Gln753–Arg799 the composition is skewed to basic and acidic residues. Residue Ser813 is modified to Phosphoserine. Over residues Ala826–Asp837 the composition is skewed to basic and acidic residues. 3 stretches are compositionally biased toward polar residues: residues Ala904–Pro921, Gln943–Gly953, and Ala1047–Ala1066. A compositionally biased stretch (basic residues) spans Arg1164–Lys1175. Over residues Ser1176–Pro1203 the composition is skewed to basic and acidic residues. Residues Asp1401–Ser1412 are compositionally biased toward acidic residues.

Interacts with FHL2. Expressed in the heart and skeletal muscle (at protein level).

It localises to the cytoplasm. It is found in the myofibril. The protein resides in the sarcomere. The protein localises to the z line. Its function is as follows. Plays an important role in cardiomyocyte hypertrophy via activation of the calcineurin/NFAT signaling pathway. The chain is Cardiac-enriched FHL2-interacting protein from Mus musculus (Mouse).